Consider the following 63-residue polypeptide: Large ribosomal subunit protein uL30 (63 aa).

Belongs to the universal ribosomal protein uL30 family. In terms of assembly, part of the 50S ribosomal subunit.

The polypeptide is Large ribosomal subunit protein uL30 (Rickettsia typhi (strain ATCC VR-144 / Wilmington)).